The sequence spans 427 residues: MSNNQTLFERAQRTIPGGVNSPVRAFRSVGGTPRFVARAQGAYFWDADGKRYIDYIGSWGPMIVGHVHPDVLAAVQRVLADGFSFGAPTEAEIEIAEEICKLVPSIEQVRMVSSGTEATMSALRLARGFTGRSRIVKFEGCYHGHADSLLVKAGSGLLTFGNPTSAGVPADVAKHTTVLEYNNVAALEEAFAAFGDEIAAVIVEPVAGNMNLVRGTPEFLNALRALCTKHGAVLIFDEVMCGFRVALGGAQQHYGIKPDLTCLGKVIGGGMPAAAFGGRGDIMSHLAPLGGVYQAGTLSGNPVAVAAGLATLRLIQAPGFHDALADKTRRLADGLAAEARAAGVPFSADAIGGMFGLYFTEQVPASFADVTKSDIERFNRFFHLMLDAGVYFAPSAYEAGFVSSAHDDATLDATLDAARRAFAALRA.

An N6-(pyridoxal phosphate)lysine modification is found at K265.

Belongs to the class-III pyridoxal-phosphate-dependent aminotransferase family. HemL subfamily. Homodimer. Requires pyridoxal 5'-phosphate as cofactor.

It localises to the cytoplasm. It carries out the reaction (S)-4-amino-5-oxopentanoate = 5-aminolevulinate. It functions in the pathway porphyrin-containing compound metabolism; protoporphyrin-IX biosynthesis; 5-aminolevulinate from L-glutamyl-tRNA(Glu): step 2/2. This Burkholderia thailandensis (strain ATCC 700388 / DSM 13276 / CCUG 48851 / CIP 106301 / E264) protein is Glutamate-1-semialdehyde 2,1-aminomutase.